Here is a 351-residue protein sequence, read N- to C-terminus: MSKIEKITKQLQHEQADAAWITTPLNVFYFTGYRSEPHERLFALLITANGDQTLYCPKMEVEEVKNSPFEGKIIGYLDTENPFEIDPLSFNKLLIESEHLTVKRQRELTQNFGVQHYGDIDQTIKELRNIKNESEIENIREAAKLADKCIEIGTEFLKVGVTEREVVNHIENEIKKFGVSEMSFDTMVLFGDHAASPHGTPGERKLVKDEYVLFDLGVIYNHYCSDMTRTVKFGTPSEEAQTIYNIVLEAETNAIEAIRAGVPLQDIDKIARDIISDAGYGDYFPHRLGHGLGLEEHEYQDVSSTNSNLLEAGMVITIEPGIYVPNVAGVRIEDDILVTENGYEILTHYDK.

5 residues coordinate Mn(2+): Asp215, Asp226, His290, Glu319, and Glu333.

The protein belongs to the peptidase M24B family. Mn(2+) is required as a cofactor.

This is an uncharacterized protein from Staphylococcus haemolyticus (strain JCSC1435).